The primary structure comprises 213 residues: Thiamine-phosphate synthase (213 aa).

Residues 40-44 (QYRDK) and Asn72 contribute to the 4-amino-2-methyl-5-(diphosphooxymethyl)pyrimidine site. Mg(2+) is bound by residues Asp73 and Asp91. Thr110 lines the 4-amino-2-methyl-5-(diphosphooxymethyl)pyrimidine pocket. 137–139 (SHT) serves as a coordination point for 2-[(2R,5Z)-2-carboxy-4-methylthiazol-5(2H)-ylidene]ethyl phosphate. 4-amino-2-methyl-5-(diphosphooxymethyl)pyrimidine is bound at residue Lys140. Residue Gly167 coordinates 2-[(2R,5Z)-2-carboxy-4-methylthiazol-5(2H)-ylidene]ethyl phosphate.

The protein belongs to the thiamine-phosphate synthase family. Mg(2+) serves as cofactor.

The catalysed reaction is 2-[(2R,5Z)-2-carboxy-4-methylthiazol-5(2H)-ylidene]ethyl phosphate + 4-amino-2-methyl-5-(diphosphooxymethyl)pyrimidine + 2 H(+) = thiamine phosphate + CO2 + diphosphate. It catalyses the reaction 2-(2-carboxy-4-methylthiazol-5-yl)ethyl phosphate + 4-amino-2-methyl-5-(diphosphooxymethyl)pyrimidine + 2 H(+) = thiamine phosphate + CO2 + diphosphate. The enzyme catalyses 4-methyl-5-(2-phosphooxyethyl)-thiazole + 4-amino-2-methyl-5-(diphosphooxymethyl)pyrimidine + H(+) = thiamine phosphate + diphosphate. Its pathway is cofactor biosynthesis; thiamine diphosphate biosynthesis; thiamine phosphate from 4-amino-2-methyl-5-diphosphomethylpyrimidine and 4-methyl-5-(2-phosphoethyl)-thiazole: step 1/1. Functionally, condenses 4-methyl-5-(beta-hydroxyethyl)thiazole monophosphate (THZ-P) and 2-methyl-4-amino-5-hydroxymethyl pyrimidine pyrophosphate (HMP-PP) to form thiamine monophosphate (TMP). The sequence is that of Thiamine-phosphate synthase from Stutzerimonas stutzeri (strain A1501) (Pseudomonas stutzeri).